A 445-amino-acid polypeptide reads, in one-letter code: Probable D-serine dehydratase (445 aa).

At Lys-111 the chain carries N6-(pyridoxal phosphate)lysine.

This sequence belongs to the serine/threonine dehydratase family. DsdA subfamily. It depends on pyridoxal 5'-phosphate as a cofactor.

The enzyme catalyses D-serine = pyruvate + NH4(+). The protein is Probable D-serine dehydratase of Burkholderia pseudomallei (strain K96243).